Reading from the N-terminus, the 696-residue chain is MSQFVLEIGTEELPARFLPALERELAERFTRALADAGIECDPVCVMSTPRRAVVRMDAVNPVQSESEEVVTGPPARIAFTPEGGLTKAAEGFARTQGVEVADIFRLTTDKGEYIAVRKHMGGARSIDLLRDICPAIIGALPFPKRMRWGSGDFTYARPMRWLLALFDESVVDFEVGGVRSGNITYGHRIHGAGPLTVAHAGDYERVIREQGGVTPVGEERRNAVVTGGNTLATAAGGKVIWKDSLLDEVQGLVEHPVPCLGNIDPSFLELPREVLLTSMESHQKSFGVEDAEGRLMPHFLTVLNLTPLDGDLVRKGWERVLRARLEDARFFWKTDLASSFDAWLASLDNVIFLGPLGSMGDKTRRLEQLCAWLASEVGFDDATAAARAGRLSKGDLVSGMVGEFDTLQGIMGGIYARRMGEAEAVAAAIAEQYLPAGPDSPVPSSMCGALLSIADKADTLAGCFGLGMIPTGAADPYALRRCVLGIARIILEHGLQLDVRGLFAKAFALYGERAWKLAPEDALVKLDEFFMARLRNLFIANGYETLLVEAVLAAGCDDVRSAGARLEALAAFSRRDDFASAVLTFKRAANIIRKQGGDSDVALDGAWKADLLVEDAERHLAASLEAMFPRFDGLWAEGDYPALFGLLGELRPVVDGFFEGVMVMSDDAALRTNRLNLLQALVGRLSRLADFGALQM.

It belongs to the class-II aminoacyl-tRNA synthetase family. As to quaternary structure, tetramer of two alpha and two beta subunits.

Its subcellular location is the cytoplasm. It carries out the reaction tRNA(Gly) + glycine + ATP = glycyl-tRNA(Gly) + AMP + diphosphate. The sequence is that of Glycine--tRNA ligase beta subunit from Nitratidesulfovibrio vulgaris (strain DP4) (Desulfovibrio vulgaris).